A 168-amino-acid chain; its full sequence is Photosystem I assembly protein Ycf3 (168 aa).

TPR repeat units follow at residues 35 to 68, 72 to 105, and 120 to 153; these read AFTY…EIDP, SYIL…NPFL, and GEQA…TPGN.

Belongs to the Ycf3 family.

It is found in the plastid. It localises to the chloroplast thylakoid membrane. Functionally, essential for the assembly of the photosystem I (PSI) complex. May act as a chaperone-like factor to guide the assembly of the PSI subunits. This Coffea arabica (Arabian coffee) protein is Photosystem I assembly protein Ycf3.